The primary structure comprises 388 residues: Staphopain A (388 aa).

The N-terminal stretch at 1-25 (MKRNFPKLIALSLIFSLSITPIANA) is a signal peptide. A propeptide spanning residues 26 to 214 (ESNSNIKAKD…TSQFKSNNYT (189 aa)) is cleaved from the precursor. Catalysis depends on residues Cys-238, His-334, and Asn-355.

This sequence belongs to the peptidase C47 family. In terms of assembly, in the cytoplasm, prematurely activated/folded ScpA forms a stable non-covalent complex with ScpB. In terms of processing, cleavage leads to the activation of ScpA probably by an auto-catalytic manner.

Its subcellular location is the secreted. It carries out the reaction Broad endopeptidase action on proteins including elastin, but rather limited hydrolysis of small-molecule substrates. Assays are conveniently made with hemoglobin, casein or Z-Phe-Arg-NHMec as substrate.. Prematurely activated/folded staphopain A is inhibited by staphostatin A (ScpB), which is probably required to protect staphylococcal cytoplasmic proteins from degradation by ScpA. Its function is as follows. Cysteine protease that plays an important role in the inhibition of host innate immune response. Cleaves host elastins found in connective tissues, pulmonary surfactant protein A in the lungs, and the chemokine receptor CXCR2 on leukocytes. Proteolytic cleavage of surfactant protein A impairs bacterial phagocytosis by neutrophils while CXCR2 degradation blocks neutrophil activation and chemotaxis. Additionally, promotes vascular leakage by activating the plasma kallikerin/kinin system, resulting in hypotension. The sequence is that of Staphopain A (sspP) from Staphylococcus aureus (strain MRSA252).